Reading from the N-terminus, the 259-residue chain is Tubulin-specific chaperone C (259 aa).

A C-CAP/cofactor C-like domain is found at 112 to 241 (PEVYFENDTL…DEHPILDFTW (130 aa)).

This sequence belongs to the TBCC family.

The protein localises to the cytoplasm. It is found in the cytoskeleton. Its function is as follows. Tubulin-folding protein; involved in the final step of the tubulin folding pathway. The protein is Tubulin-specific chaperone C (cin2) of Schizosaccharomyces pombe (strain 972 / ATCC 24843) (Fission yeast).